We begin with the raw amino-acid sequence, 553 residues long: Phospholipase B-like 1 (553 aa).

An N-terminal signal peptide occupies residues 1-38 (MTRGGPGGRPGLPQPPPLLLLLLLLPLLLVTAEPPKPA). Residue N71 is glycosylated (N-linked (GlcNAc...) (high mannose) asparagine; alternate). The N-linked (GlcNAc...) (hybrid) asparagine; alternate glycan is linked to N71. The propeptide at 209–227 (LSPTKNGSLKVFKRWDMGH) is removed in mature form. N-linked (GlcNAc...) (high mannose) asparagine; alternate glycans are attached at residues N308 and N366. Residues N308 and N366 are each glycosylated (N-linked (GlcNAc...) (hybrid) asparagine; alternate). N411 carries N-linked (GlcNAc...) asparagine glycosylation. Intrachain disulfides connect C470–C475 and C474–C489. A glycan (N-linked (GlcNAc...) (high mannose) asparagine; alternate) is linked at N526. N-linked (GlcNAc...) (hybrid) asparagine; alternate glycosylation occurs at N526.

Belongs to the phospholipase B-like family. In terms of assembly, may form a homodimer, each monomer is composed of a chain A and a chain B. In terms of processing, the maturation cleavages that produces chains A and B are required to open the putative substrate binding pocket. Both chains A and B remain associated in the mature protein. As to expression, expressed in neutrophils and monocytes.

It localises to the lysosome. Functionally, in view of the small size of the putative binding pocket, it has been proposed that it may act as an amidase or a peptidase. Exhibits a weak phospholipase activity, acting on various phospholipids, including phosphatidylcholine, phosphatidylinositol, phosphatidylethanolamine and lysophospholipids. This is Phospholipase B-like 1 (PLBD1) from Homo sapiens (Human).